The chain runs to 396 residues: S-adenosylmethionine synthase (396 aa).

Glu-12 is a Mg(2+) binding site. His-18 contacts ATP. Glu-46 is a binding site for K(+). L-methionine contacts are provided by Glu-59 and Gln-102. Residues 170–172 (DGK), 238–241 (SGRF), Asp-249, 255–256 (RK), Ala-272, Lys-276, and Lys-280 contribute to the ATP site. Position 249 (Asp-249) interacts with L-methionine. Lys-280 lines the L-methionine pocket.

This sequence belongs to the AdoMet synthase family. In terms of assembly, homotetramer. Mn(2+) is required as a cofactor. Mg(2+) serves as cofactor. It depends on Co(2+) as a cofactor. Requires K(+) as cofactor.

The protein localises to the cytoplasm. The catalysed reaction is L-methionine + ATP + H2O = S-adenosyl-L-methionine + phosphate + diphosphate. The protein operates within amino-acid biosynthesis; S-adenosyl-L-methionine biosynthesis; S-adenosyl-L-methionine from L-methionine: step 1/1. In terms of biological role, catalyzes the formation of S-adenosylmethionine from methionine and ATP. The reaction comprises two steps that are both catalyzed by the same enzyme: formation of S-adenosylmethionine (AdoMet) and triphosphate, and subsequent hydrolysis of the triphosphate. The sequence is that of S-adenosylmethionine synthase (SAMS) from Triticum aestivum (Wheat).